The chain runs to 253 residues: Acetylglutamate kinase (253 aa).

Residues G40 to G41, R62, and N154 contribute to the substrate site.

Belongs to the acetylglutamate kinase family. ArgB subfamily.

The protein resides in the cytoplasm. It catalyses the reaction N-acetyl-L-glutamate + ATP = N-acetyl-L-glutamyl 5-phosphate + ADP. It functions in the pathway amino-acid biosynthesis; L-arginine biosynthesis; N(2)-acetyl-L-ornithine from L-glutamate: step 2/4. Its function is as follows. Catalyzes the ATP-dependent phosphorylation of N-acetyl-L-glutamate. The chain is Acetylglutamate kinase from Staphylococcus saprophyticus subsp. saprophyticus (strain ATCC 15305 / DSM 20229 / NCIMB 8711 / NCTC 7292 / S-41).